The following is a 207-amino-acid chain: Histone H1-like protein HC2 (207 aa).

Basic residues-rich tracts occupy residues 1 to 50 (MLGV…KTVA) and 59 to 72 (PAAK…APVR). Residues 1–72 (MLGVQKKRST…KTAAKKAPVR (72 aa)) form a disordered region. Tandem repeats lie at residues 35 to 58 (VRKV…AARK), 71 to 94 (VRKV…AARK), and 113 to 136 (VRKV…AARK). The segment at 35–136 (VRKVAAKKTV…VAKKAVAARK (102 aa)) is 3 X 24 AA repeats of V-R-K-V-A-A-K-K-T-V-A-R-K-T-V-A-K-K-A-V-A-A-R-K.

It belongs to the histone H1/H5 family. HCT subfamily.

In terms of biological role, might have a role in establishing the nucleoid structure of elementary bodies. The chain is Histone H1-like protein HC2 (hctB) from Chlamydia muridarum (strain MoPn / Nigg).